Reading from the N-terminus, the 775-residue chain is Melanoma-associated antigen D1 (775 aa).

Residues 37-330 (SEAPPTSQAT…PARQTPSAWQ (294 aa)) are disordered. A compositionally biased stretch (low complexity) spans 39–50 (APPTSQATAAAS). Polar residues-rich tracts occupy residues 52–63 (PNASPQSSQPPT), 84–100 (KAQNTTTKGPNDYSQAR), 150–180 (GQNTTTKAGPSATYNFTQSPSANEMTNNQPK), 223–237 (AQTSADGSQAQNVES), 250–260 (NNLNVEENSNG), and 297–330 (LAWQNPSGWQNQTARQTPPARQSPPARQTPSAWQ). Tandem repeats lie at residues 293-298 (WQTPLA), 299-304 (WQNPSG), 305-310 (WQNQTA), 329-334 (WQNPVA), 335-340 (WQNPVI), 341-346 (WPNPVI), 347-352 (WQNPVI), 353-358 (WPNPIV), 359-364 (WPGPIV), 365-370 (WPNPMA), 371-376 (WQSTPG), 377-382 (WQSPPS), 383-388 (WQAPPS), 389-394 (WQSPQD), 395-400 (WQGPPD), 401-406 (WQLPPD), 407-412 (WSMPPD), 413-418 (WSFPSD), and 419-424 (WPFPPD). Residues 293-441 (WQTPLAWQNP…IPPDWQNLRP (149 aa)) are 22 X 6 AA tandem repeats of W-[PQ]-X-P-X-X. The disordered stretch occupies residues 374 to 407 (TPGWQSPPSWQAPPSWQSPQDWQGPPDWQLPPDW). Over residues 375 to 406 (PGWQSPPSWQAPPSWQSPQDWQGPPDWQLPPD) the composition is skewed to low complexity. One copy of the 20; approximate repeat lies at 425-429 (WIPAD). A run of 2 repeats spans residues 430–435 (WPIPPD) and 436–441 (WQNLRP). Over residues 437-452 (QNLRPSPNLRSSPNSR) the composition is skewed to low complexity. The interval 437–463 (QNLRPSPNLRSSPNSRASQNQGPPQPR) is disordered. Residues 468–666 (LQERANKLVK…RDWTAQFMEA (199 aa)) form the MAGE domain.

As to quaternary structure, interacts with DLX5, DLX7 and MSX2 and forms homomultimers. Interacts with UNC5A. Interacts with TRIM28 and PJA1. Interacts with NGFR/p75NTR and RORA. Ubiquitous and in the seminiferous tubules expressed in Sertoli cells but not in germ cells. Expression decreases in all tissues with increased age and is detectable only in brain cortex and lung.

The protein resides in the cytoplasm. It is found in the cell membrane. The protein localises to the nucleus. In terms of biological role, involved in the apoptotic response after nerve growth factor (NGF) binding in neuronal cells. Inhibits cell cycle progression, and facilitates NGFR-mediated apoptosis. May act as a regulator of the function of DLX family members. May enhance ubiquitin ligase activity of RING-type zinc finger-containing E3 ubiquitin-protein ligases. Proposed to act through recruitment and/or stabilization of the Ubl-conjugating enzyme (E2) at the E3:substrate complex. Plays a role in the circadian rhythm regulation. May act as RORA co-regulator, modulating the expression of core clock genes such as BMAL1 and NFIL3, induced, or NR1D1, repressed. The chain is Melanoma-associated antigen D1 (Maged1) from Rattus norvegicus (Rat).